We begin with the raw amino-acid sequence, 321 residues long: Glucokinase (321 aa).

8-13 (ADIGGT) contacts ATP.

Belongs to the bacterial glucokinase family.

It is found in the cytoplasm. It catalyses the reaction D-glucose + ATP = D-glucose 6-phosphate + ADP + H(+). In Paramagnetospirillum magneticum (strain ATCC 700264 / AMB-1) (Magnetospirillum magneticum), this protein is Glucokinase.